The following is a 484-amino-acid chain: tRNA sulfurtransferase (484 aa).

Residues 63 to 167 form the THUMP domain; sequence ANLILLLSST…NEKLFFIDKK (105 aa). Residues 185 to 186, lysine 267, glycine 289, and glutamine 298 contribute to the ATP site; that span reads LI. A disulfide bridge connects residues cysteine 346 and cysteine 458. Positions 406–484 constitute a Rhodanese domain; the sequence is FAENEIVLDI…GFDNVKVYRP (79 aa). The active-site Cysteine persulfide intermediate is cysteine 458.

It belongs to the ThiI family.

The protein resides in the cytoplasm. It catalyses the reaction [ThiI sulfur-carrier protein]-S-sulfanyl-L-cysteine + a uridine in tRNA + 2 reduced [2Fe-2S]-[ferredoxin] + ATP + H(+) = [ThiI sulfur-carrier protein]-L-cysteine + a 4-thiouridine in tRNA + 2 oxidized [2Fe-2S]-[ferredoxin] + AMP + diphosphate. The catalysed reaction is [ThiS sulfur-carrier protein]-C-terminal Gly-Gly-AMP + S-sulfanyl-L-cysteinyl-[cysteine desulfurase] + AH2 = [ThiS sulfur-carrier protein]-C-terminal-Gly-aminoethanethioate + L-cysteinyl-[cysteine desulfurase] + A + AMP + 2 H(+). Its pathway is cofactor biosynthesis; thiamine diphosphate biosynthesis. In terms of biological role, catalyzes the ATP-dependent transfer of a sulfur to tRNA to produce 4-thiouridine in position 8 of tRNAs, which functions as a near-UV photosensor. Also catalyzes the transfer of sulfur to the sulfur carrier protein ThiS, forming ThiS-thiocarboxylate. This is a step in the synthesis of thiazole, in the thiamine biosynthesis pathway. The sulfur is donated as persulfide by IscS. The sequence is that of tRNA sulfurtransferase from Psychromonas ingrahamii (strain DSM 17664 / CCUG 51855 / 37).